The primary structure comprises 1561 residues: ABC-type transporter phomO' (1561 aa).

Transmembrane regions (helical) follow at residues 34 to 54, 110 to 130, 139 to 159, 172 to 192, 202 to 222, 314 to 334, and 358 to 378; these read LYFEEVVFVLVPSCVFILLAA, CTAGLLVTLHVAGLILLCTTV, SVPASVVAALAFGVVPVLAHF, SSSLLVGLFLCVAVLLRAPLV, GSALVAVEIASLVLQLVLIAV, LGLYALAPVIPRLCLAGFTLA, and GLIGATFLIYTGIAVSTGWYW. The ABC transmembrane type-1 1 domain occupies 326-599; that stretch reads LCLAGFTLAQ…LLQIIPSFGA (274 aa). The N-linked (GlcNAc...) asparagine glycan is linked to asparagine 384. The next 4 helical transmembrane spans lie at 428–448, 452–472, 535–555, and 577–597; these read LAYAHELWVAPIETAIGTWML, VGPPGLVVLGIIGVCLGTSTY, LIVGTLLSSYSTATLAPVLVF, and LIWISLLASPLIQLLQIIPSF. Residues 645 to 871 enclose the ABC transporter 1 domain; that stretch reads IHNSSFSYTD…VEDENGDVDN (227 aa). N-linked (GlcNAc...) asparagine glycosylation occurs at asparagine 647. 678–685 contacts ATP; the sequence is GPAGCGKS. N-linked (GlcNAc...) asparagine glycosylation is present at asparagine 721. The disordered stretch occupies residues 853–899; that stretch reads YQFPPSQADVEDENGDVDNGAENTRPRESSHTTEAQSGPPEPKSKPT. The next 4 membrane-spanning stretches (helical) occupy residues 913–933, 969–989, 1037–1054, and 1147–1167; these read SIGFLNLVLFIGGGIIFAFCL, VLPLIAVAGWVAQLMMLIVPL, LFNTAAALLTGIAQVILI, and LVLNLVVAGLALVVMGAAVGL. An ABC transmembrane type-1 2 domain is found at 920-1209; that stretch reads VLFIGGGIIF…LLTAWTSLET (290 aa). N-linked (GlcNAc...) asparagine glycosylation occurs at asparagine 1189. Residues 1229–1238 are compositionally biased toward basic and acidic residues; that stretch reads DVLVRPDSLD. The segment at 1229-1298 is disordered; the sequence is DVLVRPDSLD…DVAADGEKHE (70 aa). A compositionally biased stretch (acidic residues) spans 1269–1280; it reads YDDDDESDENTD. Positions 1297–1545 constitute an ABC transporter 2 domain; that stretch reads HEATTITTTS…SDIFAFFGRS (249 aa). 1333 to 1340 lines the ATP pocket; sequence GRTGSGKS. N-linked (GlcNAc...) asparagine glycosylation is present at asparagine 1496.

The protein belongs to the ABC transporter superfamily. ABCC family. Conjugate transporter (TC 3.A.1.208) subfamily.

It is found in the membrane. In terms of biological role, ABC-type transporter; part of the gene cluster that mediates the biosynthesis of the phomopsins, a group of hexapeptide mycotoxins which infects lupins and causes lupinosis disease in livestock. This is ABC-type transporter phomO' from Diaporthe leptostromiformis (Lupinosis disease fungus).